Here is a 741-residue protein sequence, read N- to C-terminus: Pentatricopeptide repeat-containing protein At1g05670, mitochondrial (741 aa).

A mitochondrion-targeting transit peptide spans 1-21 (MKKPFTGLLMKRGTLSSFRNF). PPR repeat units follow at residues 174 to 208 (DPRV…GLVL), 209 to 244 (SVDS…GVCW), 245 to 279 (NVAS…GYTP), 280 to 314 (DVIS…GLKP), 315 to 349 (NSYI…GILP), 350 to 384 (DTVV…DITP), 385 to 419 (DVLT…GLEP), 420 to 454 (DSVT…GCSP), 455 to 489 (NVVT…GLQP), 490 to 524 (NIFT…GLNA), 525 to 559 (DTVT…GLQP), 560 to 594 (TIVT…GIAP), 595 to 629 (NATT…GVGP), 630 to 664 (DGKT…GFSV), and 665 to 699 (SVST…GLAA).

This sequence belongs to the PPR family. P subfamily.

The protein resides in the mitochondrion. This chain is Pentatricopeptide repeat-containing protein At1g05670, mitochondrial, found in Arabidopsis thaliana (Mouse-ear cress).